Here is a 441-residue protein sequence, read N- to C-terminus: ATP-dependent protease ATPase subunit HslU (441 aa).

Residues Ile18, 60 to 65, Asp254, Glu319, and Arg391 contribute to the ATP site; that span reads GVGKTE.

It belongs to the ClpX chaperone family. HslU subfamily. In terms of assembly, a double ring-shaped homohexamer of HslV is capped on each side by a ring-shaped HslU homohexamer. The assembly of the HslU/HslV complex is dependent on binding of ATP.

It localises to the cytoplasm. Functionally, ATPase subunit of a proteasome-like degradation complex; this subunit has chaperone activity. The binding of ATP and its subsequent hydrolysis by HslU are essential for unfolding of protein substrates subsequently hydrolyzed by HslV. HslU recognizes the N-terminal part of its protein substrates and unfolds these before they are guided to HslV for hydrolysis. This Shewanella sediminis (strain HAW-EB3) protein is ATP-dependent protease ATPase subunit HslU.